We begin with the raw amino-acid sequence, 259 residues long: Deoxyribose-phosphate aldolase (259 aa).

Aspartate 102 (proton donor/acceptor) is an active-site residue. Catalysis depends on lysine 167, which acts as the Schiff-base intermediate with acetaldehyde. The active-site Proton donor/acceptor is the lysine 201.

The protein belongs to the DeoC/FbaB aldolase family. DeoC type 2 subfamily.

It localises to the cytoplasm. It catalyses the reaction 2-deoxy-D-ribose 5-phosphate = D-glyceraldehyde 3-phosphate + acetaldehyde. It participates in carbohydrate degradation; 2-deoxy-D-ribose 1-phosphate degradation; D-glyceraldehyde 3-phosphate and acetaldehyde from 2-deoxy-alpha-D-ribose 1-phosphate: step 2/2. Functionally, catalyzes a reversible aldol reaction between acetaldehyde and D-glyceraldehyde 3-phosphate to generate 2-deoxy-D-ribose 5-phosphate. The protein is Deoxyribose-phosphate aldolase of Klebsiella pneumoniae (strain 342).